The primary structure comprises 476 residues: GTPase Der (476 aa).

2 EngA-type G domains span residues 3-167 (FTVA…GEDM) and 205-380 (LRVA…KTWN). GTP is bound by residues 9 to 16 (GRPNVGKS), 56 to 60 (DTAGL), 119 to 122 (NKSE), 211 to 218 (GRPNAGKS), 258 to 262 (DTAGM), and 323 to 326 (NKWD). The KH-like domain maps to 381 to 465 (RRISTAKLNR…PIRVHYRGSD (85 aa)).

This sequence belongs to the TRAFAC class TrmE-Era-EngA-EngB-Septin-like GTPase superfamily. EngA (Der) GTPase family. In terms of assembly, associates with the 50S ribosomal subunit.

Its function is as follows. GTPase that plays an essential role in the late steps of ribosome biogenesis. The chain is GTPase Der from Agrobacterium fabrum (strain C58 / ATCC 33970) (Agrobacterium tumefaciens (strain C58)).